The primary structure comprises 175 residues: Alpha-crystallin B chain (175 aa).

Position 1 is an N-acetylmethionine (Met1). Phosphoserine is present on Ser19. O-linked (GlcNAc) serine glycosylation occurs at Ser41. 2 positions are modified to phosphoserine: Ser45 and Ser59. The sHSP domain maps to 56 to 164 (RAPSWIDTGL…PERTIPITRE (109 aa)). His83 is a Zn(2+) binding site. The residue at position 92 (Lys92) is an N6-acetyllysine. The Zn(2+) site is built by His104, Glu106, His111, and His119. Positions 142-175 (VLTVNGPRRQASGPERTIPITREEKPAVTAAPKK) are disordered. N6-acetyllysine is present on Lys166. Thr170 carries O-linked (GlcNAc) threonine glycosylation.

This sequence belongs to the small heat shock protein (HSP20) family. Heteromer composed of three CRYAA and one CRYAB subunits. Aggregates with homologous proteins, including the small heat shock protein HSPB1, to form large heteromeric complexes. Inter-subunit bridging via zinc ions enhances stability, which is crucial as there is no protein turn over in the lens. Interacts with HSPBAP1 and TTN/titin. Interacts with TMEM109; in the cellular response to DNA damage. Interacts with DES; binds rapidly during early stages of DES filament assembly and a reduced binding seen in the later stages. Interacts with TMED10; the interaction mediates the translocation from the cytoplasm into the ERGIC (endoplasmic reticulum-Golgi intermediate compartment) and thereby secretion. Interacts with ATP6V1A and with MTOR, forming a ternary complex.

It is found in the cytoplasm. It localises to the nucleus. The protein resides in the secreted. The protein localises to the lysosome. In terms of biological role, may contribute to the transparency and refractive index of the lens. Has chaperone-like activity, preventing aggregation of various proteins under a wide range of stress conditions. In lens epithelial cells, stabilizes the ATP6V1A protein, preventing its degradation by the proteasome. The sequence is that of Alpha-crystallin B chain (CRYAB) from Sus scrofa (Pig).